We begin with the raw amino-acid sequence, 255 residues long: Large ribosomal subunit protein uL4 (255 aa).

This sequence belongs to the universal ribosomal protein uL4 family. Part of the 50S ribosomal subunit.

In terms of biological role, one of the primary rRNA binding proteins, this protein initially binds near the 5'-end of the 23S rRNA. It is important during the early stages of 50S assembly. It makes multiple contacts with different domains of the 23S rRNA in the assembled 50S subunit and ribosome. Its function is as follows. Forms part of the polypeptide exit tunnel. This Thermococcus onnurineus (strain NA1) protein is Large ribosomal subunit protein uL4.